The primary structure comprises 200 residues: ATP-dependent Clp protease proteolytic subunit 2 (200 aa).

Ser101 acts as the Nucleophile in catalysis. His126 is an active-site residue.

This sequence belongs to the peptidase S14 family. Fourteen ClpP subunits assemble into 2 heptameric rings which stack back to back to give a disk-like structure with a central cavity, resembling the structure of eukaryotic proteasomes.

The protein localises to the cytoplasm. The catalysed reaction is Hydrolysis of proteins to small peptides in the presence of ATP and magnesium. alpha-casein is the usual test substrate. In the absence of ATP, only oligopeptides shorter than five residues are hydrolyzed (such as succinyl-Leu-Tyr-|-NHMec, and Leu-Tyr-Leu-|-Tyr-Trp, in which cleavage of the -Tyr-|-Leu- and -Tyr-|-Trp bonds also occurs).. In terms of biological role, cleaves peptides in various proteins in a process that requires ATP hydrolysis. Has a chymotrypsin-like activity. Plays a major role in the degradation of misfolded proteins. This chain is ATP-dependent Clp protease proteolytic subunit 2, found in Prochlorococcus marinus (strain NATL2A).